The primary structure comprises 657 residues: Penicillin-binding protein activator LpoA (657 aa).

A signal peptide spans Met-1 to Ala-25. The N-palmitoyl cysteine moiety is linked to residue Cys-26. Cys-26 is lipidated: S-diacylglycerol cysteine.

Belongs to the LpoA family. As to quaternary structure, interacts with PBP1a.

The protein localises to the cell outer membrane. Its function is as follows. Regulator of peptidoglycan synthesis that is essential for the function of penicillin-binding protein 1A (PBP1a). The chain is Penicillin-binding protein activator LpoA from Yersinia pestis bv. Antiqua (strain Angola).